A 105-amino-acid chain; its full sequence is Protein AlbB (105 aa).

In terms of biological role, involved in the biosynthesis of albonoursin (cyclo[(alpha,beta-dehydro-Phe)-(alpha,beta-dehydro-Leu)]), an antibacterial peptide. AlbB is essential for cyclic dipeptide oxidase AlbA (CDO) activity. This is Protein AlbB (albB) from Streptomyces noursei (Streptomyces albulus).